The sequence spans 254 residues: Ribonuclease PH (254 aa).

Phosphate is bound by residues R90 and G128–R130.

It belongs to the RNase PH family. In terms of assembly, homohexameric ring arranged as a trimer of dimers.

The enzyme catalyses tRNA(n+1) + phosphate = tRNA(n) + a ribonucleoside 5'-diphosphate. Functionally, phosphorolytic 3'-5' exoribonuclease that plays an important role in tRNA 3'-end maturation. Removes nucleotide residues following the 3'-CCA terminus of tRNAs; can also add nucleotides to the ends of RNA molecules by using nucleoside diphosphates as substrates, but this may not be physiologically important. Probably plays a role in initiation of 16S rRNA degradation (leading to ribosome degradation) during starvation. In Corynebacterium kroppenstedtii (strain DSM 44385 / JCM 11950 / CIP 105744 / CCUG 35717), this protein is Ribonuclease PH.